The following is a 129-amino-acid chain: Fluoride-specific ion channel FluC (129 aa).

Transmembrane regions (helical) follow at residues 4–24 (VLIVMLGGFIGANLRYWLGEW), 30–50 (GFPTGTFVINAIGCFLLGWLL), 63–83 (WSLLLGTGLIGSFTTFSTFSV), and 95–115 (IVASLYVFGSIFLGIGLAYIG). Residues Gly73 and Thr76 each coordinate Na(+).

It belongs to the fluoride channel Fluc/FEX (TC 1.A.43) family.

The protein resides in the cell membrane. It carries out the reaction fluoride(in) = fluoride(out). With respect to regulation, na(+) is not transported, but it plays an essential structural role and its presence is essential for fluoride channel function. In terms of biological role, fluoride-specific ion channel. Important for reducing fluoride concentration in the cell, thus reducing its toxicity. This Oceanobacillus iheyensis (strain DSM 14371 / CIP 107618 / JCM 11309 / KCTC 3954 / HTE831) protein is Fluoride-specific ion channel FluC.